The chain runs to 613 residues: pH-response transcription factor pacC/RIM101 (613 aa).

Residues 1-61 (MSPSAPEQKP…SSTAPSTSSD (61 aa)) form a disordered region. The segment covering 11-60 (QLQQQQQQQQQGSSSGDSSSGSVNDSKSVTPAPSATSSTSQSSTAPSTSS) has biased composition (low complexity). 3 C2H2-type zinc fingers span residues 64 to 89 (LICR…CERH), 100 to 124 (LTCQ…IRVH), and 130 to 152 (HKCE…VKTH). A compositionally biased stretch (basic and acidic residues) spans 146–157 (KKHVKTHADDSV). Disordered regions lie at residues 146–186 (KKHV…YDHT), 371–391 (NTPS…GADG), 406–535 (AISS…ATRE), and 565–613 (EFVE…MPGA). Positions 417–441 (PPSSSMSYTSGHSPSPSSSAMSPQS) are enriched in low complexity. Polar residues-rich tracts occupy residues 442–460 (RHGS…SLPA) and 506–517 (SGASTPKASESA). A YPX[LI] motif 1 motif is present at residues 451–454 (YPTL). Residues 605 to 608 (YPIL) carry the YPX[LI] motif 2 motif.

Belongs to the pacC/RIM101 family. As to quaternary structure, binds to DNA. In terms of processing, activated by C-terminal proteolytic cleavage by signaling protease (probably palB/RIM13) at neutral to alkaline ambient pH.

The protein localises to the cytoplasm. It localises to the nucleus. Its function is as follows. Transcription factor that mediates regulation of both acid- and alkaline-expressed genes in response to ambient pH. At alkaline ambient pH, activates transcription of alkaline-expressed genes (including PAC1 itself) and represses transcription of acid-expressed genes. The sequence is that of pH-response transcription factor pacC/RIM101 (PAC1) from Gibberella moniliformis (Maize ear and stalk rot fungus).